A 258-amino-acid polypeptide reads, in one-letter code: Thiazole synthase (258 aa).

The Schiff-base intermediate with DXP role is filled by Lys-98. 1-deoxy-D-xylulose 5-phosphate-binding positions include Gly-159, 185 to 186 (AG), and 207 to 208 (NT).

The protein belongs to the ThiG family. As to quaternary structure, homotetramer. Forms heterodimers with either ThiH or ThiS.

The protein resides in the cytoplasm. It catalyses the reaction [ThiS sulfur-carrier protein]-C-terminal-Gly-aminoethanethioate + 2-iminoacetate + 1-deoxy-D-xylulose 5-phosphate = [ThiS sulfur-carrier protein]-C-terminal Gly-Gly + 2-[(2R,5Z)-2-carboxy-4-methylthiazol-5(2H)-ylidene]ethyl phosphate + 2 H2O + H(+). It functions in the pathway cofactor biosynthesis; thiamine diphosphate biosynthesis. Its function is as follows. Catalyzes the rearrangement of 1-deoxy-D-xylulose 5-phosphate (DXP) to produce the thiazole phosphate moiety of thiamine. Sulfur is provided by the thiocarboxylate moiety of the carrier protein ThiS. In vitro, sulfur can be provided by H(2)S. The chain is Thiazole synthase from Bacillus cereus (strain ZK / E33L).